The chain runs to 612 residues: Zinc metalloproteinase-disintegrin-like 2a (612 aa).

The N-terminal stretch at 1 to 20 is a signal peptide; it reads MIQVLLVTICLAVFPYQGSS. A propeptide spanning residues 21–189 is cleaved from the precursor; that stretch reads IILGSGNVND…KKASQLNLTP (169 aa). Residues 199 to 395 form the Peptidase M12B domain; sequence KYIELVIVAD…NRPPCILNKP (197 aa). Residue E202 participates in Ca(2+) binding. Residue N218 is glycosylated (N-linked (GlcNAc...) asparagine). D286 is a Ca(2+) binding site. 3 cysteine pairs are disulfide-bonded: C310–C390, C350–C374, and C352–C357. Residue H335 participates in Zn(2+) binding. E336 is a catalytic residue. H339 and H345 together coordinate Zn(2+). C390, N393, V405, N408, F410, E412, E415, and D418 together coordinate Ca(2+). The Disintegrin domain occupies 403 to 489; sequence PPVCGNYFVE…DCPTDNFQRN (87 aa). Disulfide bonds link C406–C435, C417–C430, C419–C425, C429–C452, C443–C449, C448–C474, C461–C481, C468–C500, C493–C505, C512–C562, C527–C573, C540–C550, C557–C599, and C593–C605. The short motif at 467–469 is the D/ECD-tripeptide element; it reads ECD.

Belongs to the venom metalloproteinase (M12B) family. P-III subfamily. The cofactor is Zn(2+). As to expression, expressed by the venom gland.

It is found in the secreted. In terms of biological role, snake venom metalloproteinase that impairs hemostasis in the envenomed animal. This chain is Zinc metalloproteinase-disintegrin-like 2a, found in Crotalus adamanteus (Eastern diamondback rattlesnake).